The following is a 317-amino-acid chain: Pantothenate kinase (317 aa).

Residue 95–102 (GSVAVGKS) coordinates ATP.

The protein belongs to the prokaryotic pantothenate kinase family.

It localises to the cytoplasm. It carries out the reaction (R)-pantothenate + ATP = (R)-4'-phosphopantothenate + ADP + H(+). The protein operates within cofactor biosynthesis; coenzyme A biosynthesis; CoA from (R)-pantothenate: step 1/5. This Myxococcus xanthus (strain DK1622) protein is Pantothenate kinase.